A 499-amino-acid polypeptide reads, in one-letter code: Maturase K (499 aa).

Belongs to the intron maturase 2 family. MatK subfamily.

The protein resides in the plastid. It is found in the chloroplast. Usually encoded in the trnK tRNA gene intron. Probably assists in splicing its own and other chloroplast group II introns. The protein is Maturase K of Chamaecrista fasciculata (Showy partridge pea).